Here is a 178-residue protein sequence, read N- to C-terminus: Stathmin-2-B (178 aa).

The SLD domain maps to 38–178 (DDMEVKQLNK…KNKEQLELSG (141 aa)). The stretch at 75–178 (KRKDVSLEEI…KNKEQLELSG (104 aa)) forms a coiled coil.

The protein belongs to the stathmin family. Nervous tissue.

The protein localises to the cytoplasm. It is found in the membrane. It localises to the cell projection. The protein resides in the lamellipodium. The sequence is that of Stathmin-2-B (stmn2-b) from Xenopus laevis (African clawed frog).